A 690-amino-acid polypeptide reads, in one-letter code: uncharacterized protein (690 aa).

A disordered region spans residues 553–601; that stretch reads DESELLENEDKSESLENEDKSESLENEDKSESLENEDKSESLENEKKEK. Over residues 560–601 the composition is skewed to basic and acidic residues; sequence NEDKSESLENEDKSESLENEDKSESLENEDKSESLENEKKEK.

It belongs to the glycosyltransferase 2 family.

This is an uncharacterized protein from Rickettsia bellii (strain RML369-C).